A 360-amino-acid polypeptide reads, in one-letter code: Mitogen-activated protein kinase 14 (360 aa).

Serine 2 bears the N-acetylserine mark. Serine 2 carries the phosphoserine modification. The residue at position 16 (threonine 16) is a Phosphothreonine. One can recognise a Protein kinase domain in the interval 24-308 (YQNLSPVGSG…AAQALAHAYF (285 aa)). ATP is bound by residues 30-38 (VGSGAYGSV) and lysine 53. An N6-acetyllysine mark is found at lysine 53 and lysine 152. The Proton acceptor role is filled by aspartate 168. Threonine 180 is modified (phosphothreonine; by MAP2K3, MAP2K4, MAP2K6 and autocatalysis). The TXY signature appears at 180–182 (TGY). Residue tyrosine 182 is modified to Phosphotyrosine; by MAP2K3, MAP2K4, MAP2K6 and autocatalysis. Threonine 263 is subject to Phosphothreonine. Residue tyrosine 323 is modified to Phosphotyrosine; by ZAP70.

This sequence belongs to the protein kinase superfamily. CMGC Ser/Thr protein kinase family. MAP kinase subfamily. As to quaternary structure, component of a signaling complex containing at least AKAP13, PKN1, MAPK14, ZAK and MAP2K3. Within this complex, AKAP13 interacts directly with PKN1, which in turn recruits MAPK14, MAP2K3 and ZAK. Binds to a kinase interaction motif within the protein tyrosine phosphatase, PTPRR. This interaction retains MAPK14 in the cytoplasm and prevents nuclear accumulation. Interacts with SPAG9 and GADD45A. Interacts with CDC25B, CDC25C, DUSP1, DUSP10, DUSP16, NP60, SUPT20H and TAB1. Interacts with casein kinase II subunits CSNK2A1 and CSNK2B. Interacts with PPM1D. Interacts with CDK5RAP3; recruits PPM1D to MAPK14 and may regulate its dephosphorylation. Interacts with DUSP2; this interaction does not lead to catalytic activation of DUSP2 and dephosphrylation of MAPK14. The cofactor is Mg(2+). Dually phosphorylated on Thr-180 and Tyr-182 by the MAP2Ks MAP2K3/MKK3, MAP2K4/MKK4 and MAP2K6/MKK6 in response to inflammatory citokines, environmental stress or growth factors, which activates the enzyme. Dual phosphorylation can also be mediated by TAB1-mediated autophosphorylation. TCR engagement in T-cells also leads to Tyr-323 phosphorylation by ZAP70. Dephosphorylated and inactivated by DUPS1, DUSP10 and DUSP16. PPM1D also mediates dephosphorylation and inactivation of MAPK14. Post-translationally, acetylated at Lys-53 and Lys-152 by KAT2B and EP300. Acetylation at Lys-53 increases the affinity for ATP and enhances kinase activity. Lys-53 and Lys-152 are deacetylated by HDAC3. In terms of processing, ubiquitinated. Ubiquitination leads to degradation by the proteasome pathway. In terms of tissue distribution, brain, heart, placenta, pancreas and skeletal muscle. Expressed to a lesser extent in lung, liver and kidney.

The protein localises to the cytoplasm. The protein resides in the nucleus. The enzyme catalyses L-seryl-[protein] + ATP = O-phospho-L-seryl-[protein] + ADP + H(+). The catalysed reaction is L-threonyl-[protein] + ATP = O-phospho-L-threonyl-[protein] + ADP + H(+). Activated by cell stresses such as DNA damage, heat shock, osmotic shock, anisomycin and sodium arsenite, as well as pro-inflammatory stimuli such as bacterial lipopolysaccharide (LPS) and interleukin-1. Activation occurs through dual phosphorylation of Thr-180 and Tyr-182 by either of two dual specificity kinases, MAP2K3/MKK3 or MAP2K6/MKK6, and potentially also MAP2K4/MKK4, as well as by TAB1-mediated autophosphorylation. MAPK14 phosphorylated on both Thr-180 and Tyr-182 is 10-20-fold more active than MAPK14 phosphorylated only on Thr-180, whereas MAPK14 phosphorylated on Tyr-182 alone is inactive. whereas Thr-180 is necessary for catalysis, Tyr-182 may be required for auto-activation and substrate recognition. Phosphorylated at Tyr-323 by ZAP70 in an alternative activation pathway in response to TCR signaling in T-cells. This alternative pathway is inhibited by GADD45A. Inhibited by dual specificity phosphatases, such as DUSP1, DUSP10, and DUSP16. Specifically inhibited by the binding of pyridinyl-imidazole compounds, which are cytokine-suppressive anti-inflammatory drugs (CSAID). Isoform Mxi2 is 100-fold less sensitive to these agents than the other isoforms and is not inhibited by DUSP1. Isoform Exip is not activated by MAP2K6. SB203580 is an inhibitor of MAPK14. Functionally, serine/threonine kinase which acts as an essential component of the MAP kinase signal transduction pathway. MAPK14 is one of the four p38 MAPKs which play an important role in the cascades of cellular responses evoked by extracellular stimuli such as pro-inflammatory cytokines or physical stress leading to direct activation of transcription factors. Accordingly, p38 MAPKs phosphorylate a broad range of proteins and it has been estimated that they may have approximately 200 to 300 substrates each. Some of the targets are downstream kinases which are activated through phosphorylation and further phosphorylate additional targets. RPS6KA5/MSK1 and RPS6KA4/MSK2 can directly phosphorylate and activate transcription factors such as CREB1, ATF1, the NF-kappa-B isoform RELA/NFKB3, STAT1 and STAT3, but can also phosphorylate histone H3 and the nucleosomal protein HMGN1. RPS6KA5/MSK1 and RPS6KA4/MSK2 play important roles in the rapid induction of immediate-early genes in response to stress or mitogenic stimuli, either by inducing chromatin remodeling or by recruiting the transcription machinery. On the other hand, two other kinase targets, MAPKAPK2/MK2 and MAPKAPK3/MK3, participate in the control of gene expression mostly at the post-transcriptional level, by phosphorylating ZFP36 (tristetraprolin) and ELAVL1, and by regulating EEF2K, which is important for the elongation of mRNA during translation. MKNK1/MNK1 and MKNK2/MNK2, two other kinases activated by p38 MAPKs, regulate protein synthesis by phosphorylating the initiation factor EIF4E2. MAPK14 also interacts with casein kinase II, leading to its activation through autophosphorylation and further phosphorylation of TP53/p53. In the cytoplasm, the p38 MAPK pathway is an important regulator of protein turnover. For example, CFLAR is an inhibitor of TNF-induced apoptosis whose proteasome-mediated degradation is regulated by p38 MAPK phosphorylation. In a similar way, MAPK14 phosphorylates the ubiquitin ligase SIAH2, regulating its activity towards EGLN3. MAPK14 may also inhibit the lysosomal degradation pathway of autophagy by interfering with the intracellular trafficking of the transmembrane protein ATG9. Another function of MAPK14 is to regulate the endocytosis of membrane receptors by different mechanisms that impinge on the small GTPase RAB5A. In addition, clathrin-mediated EGFR internalization induced by inflammatory cytokines and UV irradiation depends on MAPK14-mediated phosphorylation of EGFR itself as well as of RAB5A effectors. Ectodomain shedding of transmembrane proteins is regulated by p38 MAPKs as well. In response to inflammatory stimuli, p38 MAPKs phosphorylate the membrane-associated metalloprotease ADAM17. Such phosphorylation is required for ADAM17-mediated ectodomain shedding of TGF-alpha family ligands, which results in the activation of EGFR signaling and cell proliferation. Another p38 MAPK substrate is FGFR1. FGFR1 can be translocated from the extracellular space into the cytosol and nucleus of target cells, and regulates processes such as rRNA synthesis and cell growth. FGFR1 translocation requires p38 MAPK activation. In the nucleus, many transcription factors are phosphorylated and activated by p38 MAPKs in response to different stimuli. Classical examples include ATF1, ATF2, ATF6, ELK1, PTPRH, DDIT3, TP53/p53 and MEF2C and MEF2A. The p38 MAPKs are emerging as important modulators of gene expression by regulating chromatin modifiers and remodelers. The promoters of several genes involved in the inflammatory response, such as IL6, IL8 and IL12B, display a p38 MAPK-dependent enrichment of histone H3 phosphorylation on 'Ser-10' (H3S10ph) in LPS-stimulated myeloid cells. This phosphorylation enhances the accessibility of the cryptic NF-kappa-B-binding sites marking promoters for increased NF-kappa-B recruitment. Phosphorylates CDC25B and CDC25C which is required for binding to 14-3-3 proteins and leads to initiation of a G2 delay after ultraviolet radiation. Phosphorylates TIAR following DNA damage, releasing TIAR from GADD45A mRNA and preventing mRNA degradation. The p38 MAPKs may also have kinase-independent roles, which are thought to be due to the binding to targets in the absence of phosphorylation. Protein O-Glc-N-acylation catalyzed by the OGT is regulated by MAPK14, and, although OGT does not seem to be phosphorylated by MAPK14, their interaction increases upon MAPK14 activation induced by glucose deprivation. This interaction may regulate OGT activity by recruiting it to specific targets such as neurofilament H, stimulating its O-Glc-N-acylation. Required in mid-fetal development for the growth of embryo-derived blood vessels in the labyrinth layer of the placenta. Also plays an essential role in developmental and stress-induced erythropoiesis, through regulation of EPO gene expression. Isoform MXI2 activation is stimulated by mitogens and oxidative stress and only poorly phosphorylates ELK1 and ATF2. Isoform EXIP may play a role in the early onset of apoptosis. Phosphorylates S100A9 at 'Thr-113'. Phosphorylates NLRP1 downstream of MAP3K20/ZAK in response to UV-B irradiation and ribosome collisions, promoting activation of the NLRP1 inflammasome and pyroptosis. (Microbial infection) Activated by phosphorylation by M.tuberculosis EsxA in T-cells leading to inhibition of IFN-gamma production; phosphorylation is apparent within 15 minutes and is inhibited by kinase-specific inhibitors SB203580 and siRNA. The polypeptide is Mitogen-activated protein kinase 14 (Homo sapiens (Human)).